Consider the following 344-residue polypeptide: UDP-N-acetylenolpyruvoylglucosamine reductase (344 aa).

The region spanning 15–185 (LPACANQIIE…ISVGLKLAKA (171 aa)) is the FAD-binding PCMH-type domain. The active site involves Arg161. Ser231 acts as the Proton donor in catalysis. Residue Glu327 is part of the active site.

Belongs to the MurB family. FAD serves as cofactor.

The protein resides in the cytoplasm. The catalysed reaction is UDP-N-acetyl-alpha-D-muramate + NADP(+) = UDP-N-acetyl-3-O-(1-carboxyvinyl)-alpha-D-glucosamine + NADPH + H(+). Its pathway is cell wall biogenesis; peptidoglycan biosynthesis. Its function is as follows. Cell wall formation. This chain is UDP-N-acetylenolpyruvoylglucosamine reductase, found in Haemophilus ducreyi (strain 35000HP / ATCC 700724).